A 49-amino-acid chain; its full sequence is uncharacterized protein (49 aa).

Belongs to the ELIP/psbS family.

The protein localises to the plastid. The protein resides in the cyanelle. Functionally, possible role in chlorophyll and/or carotenoid binding. This is an uncharacterized protein from Cyanophora paradoxa.